Consider the following 384-residue polypeptide: MKFMAKIELSRHIPLVTLIVLVLCITPPIFATKNCDFPAIFSFGASNVDTGGLAAAFRAPPSPYGETYFHRSTGRFSDGRIILDFIARSFRLPYLSPYLNSLGSNFTHGANFASGGSTINIPKSILPNGKLSPFSLQIQYIQFKEFISKTKLIRDQGGVFATLIPKEDYFSKALYIFDIGQNDLTIGFFGNKTIQQVNATVPDIVNNYIENIKNIYNLGARSFWIHGTGPKGCAPVILANFPSAIKDSYGCAKQYNEVSQYFNFKLKEALAELRSNLSSAAITYVDIYTPKYSLFTNPEKYGFELPFVACCGYGGEYNIGVGCGASININGTKIVAGSCKNPSTRIIWDGVHYTEAANEIVFSQILTGVFNDPPISLDRACYRK.

A signal peptide spans 1-31; the sequence is MKFMAKIELSRHIPLVTLIVLVLCITPPIFA. S46 serves as the catalytic Nucleophile. 5 N-linked (GlcNAc...) asparagine glycosylation sites follow: N105, N191, N198, N276, and N330. Residues D349 and H352 contribute to the active site.

The protein belongs to the 'GDSL' lipolytic enzyme family. Expressed in root nodules (at protein level).

It localises to the symbiosome. Its function is as follows. Has lipase and esterase activities. Probably involved in root nodule physiology. The chain is GDSL esterase/lipase ENOD8 from Medicago truncatula (Barrel medic).